The following is a 62-amino-acid chain: E3 SUMO-protein ligase EGR2 (62 aa).

C2H2-type zinc fingers lie at residues 1 to 21 (AEGC…IRIH), 27 to 49 (FQCA…IRTH), and 55 to 62 (FACDYCGR).

The protein belongs to the EGR C2H2-type zinc-finger protein family. In terms of assembly, interacts with HCFC1. Interacts with WWP2. Interacts with UBC9. Interacts with CITED1. Interacts (via phosphorylated form) with SFN. Post-translationally, ubiquitinated by WWP2 leading to proteasomal degradation. In terms of processing, acetylated. May be deacetylated by HDAC6, HDAC10 or SIRT1.

The protein resides in the nucleus. It functions in the pathway protein modification; protein sumoylation. Sequence-specific DNA-binding transcription factor. Plays a role in hindbrain segmentation by regulating the expression of a subset of homeobox containing genes and in Schwann cell myelination by regulating the expression of genes involved in the formation and maintenance of myelin. Binds to two EGR2-consensus sites EGR2A (5'-CTGTAGGAG-3') and EGR2B (5'-ATGTAGGTG-3') in the HOXB3 enhancer and promotes HOXB3 transcriptional activation. Binds to specific DNA sites located in the promoter region of HOXA4, HOXB2 and ERBB2. Regulates hindbrain segmentation by controlling the expression of Hox genes, such as HOXA4, HOXB3 and HOXB2, and thereby specifying odd and even rhombomeres. Promotes the expression of HOXB3 in the rhombomere r5 in the hindbrain. Regulates myelination in the peripheral nervous system after birth, possibly by regulating the expression of myelin proteins, such as MPZ, and by promoting the differentiation of Schwann cells. Involved in the development of the jaw openener musculature, probably by playing a role in its innervation through trigeminal motor neurons. May play a role in adipogenesis, possibly by regulating the expression of CEBPB. Functionally, E3 SUMO-protein ligase helping SUMO1 conjugation to its coregulators NAB1 and NAB2, whose sumoylation down-regulates EGR2 transcriptional activity. This is E3 SUMO-protein ligase EGR2 (EGR2) from Cerdocyon thous (Crab-eating fox).